The chain runs to 94 residues: Integration host factor subunit beta (94 aa).

It belongs to the bacterial histone-like protein family. Heterodimer of an alpha and a beta chain.

This protein is one of the two subunits of integration host factor, a specific DNA-binding protein that functions in genetic recombination as well as in transcriptional and translational control. This chain is Integration host factor subunit beta, found in Aeromonas hydrophila subsp. hydrophila (strain ATCC 7966 / DSM 30187 / BCRC 13018 / CCUG 14551 / JCM 1027 / KCTC 2358 / NCIMB 9240 / NCTC 8049).